The sequence spans 296 residues: Phosphoribosylaminoimidazole-succinocarboxamide synthase (296 aa).

It belongs to the SAICAR synthetase family.

The catalysed reaction is 5-amino-1-(5-phospho-D-ribosyl)imidazole-4-carboxylate + L-aspartate + ATP = (2S)-2-[5-amino-1-(5-phospho-beta-D-ribosyl)imidazole-4-carboxamido]succinate + ADP + phosphate + 2 H(+). It participates in purine metabolism; IMP biosynthesis via de novo pathway; 5-amino-1-(5-phospho-D-ribosyl)imidazole-4-carboxamide from 5-amino-1-(5-phospho-D-ribosyl)imidazole-4-carboxylate: step 1/2. In Lachnospira eligens (strain ATCC 27750 / DSM 3376 / VPI C15-48 / C15-B4) (Eubacterium eligens), this protein is Phosphoribosylaminoimidazole-succinocarboxamide synthase.